The primary structure comprises 223 residues: MIQVRNLKKTFIKDGNRIEVLRGLDLKIEDGTSLAILGVSGAGKTTFVHILGTLDHPTSGEVLFNGLDVFNWPEKKLASFRNRTIGFVFQFHNLLPEFSSLENTMMPALISGMPRRNALERAETLLHDVGLGDRMTHKPSELSGGEQQRVAVARALVMEPEILLADEPTGNLDTETGRKIEDILLELNRQKGITLIVVTHNQSLAGRMSRSIGLRDGEIVTCA.

Residues I2–A223 form the ABC transporter domain. G38–T45 is an ATP binding site.

The protein belongs to the ABC transporter superfamily. Lipoprotein translocase (TC 3.A.1.125) family. The complex is composed of two ATP-binding proteins (LolD) and two transmembrane proteins (LolC and LolE).

The protein localises to the cell inner membrane. In terms of biological role, part of the ABC transporter complex LolCDE involved in the translocation of mature outer membrane-directed lipoproteins, from the inner membrane to the periplasmic chaperone, LolA. Responsible for the formation of the LolA-lipoprotein complex in an ATP-dependent manner. The protein is Lipoprotein-releasing system ATP-binding protein LolD of Syntrophus aciditrophicus (strain SB).